A 1242-amino-acid chain; its full sequence is DNA polymerase catalytic subunit (1242 aa).

3 disordered regions span residues 14-38 (GAVA…RPPQ), 644-665 (LQSA…SSSS), and 1109-1162 (APQG…RKPP). The segment covering 653 to 665 (GVSPGSGSNSSSS) has biased composition (low complexity). Residues 1111–1125 (QGSSDNGDSVTTGVV) are compositionally biased toward polar residues. Over residues 1145 to 1155 (ESNRRGGEPAK) the composition is skewed to basic and acidic residues.

It belongs to the DNA polymerase type-B family. As to quaternary structure, forms a complex with the ssDNA-binding protein UL57, the DNA polymerase processivity factor UL44, and the alkaline exonuclease UL98. Interacts with the putative helicase-primase complex composed of UL70, UL102 and UL105 proteins; these interactions may coordinate leading and lagging strand DNA synthesis at the replication fork.

It is found in the host nucleus. It catalyses the reaction DNA(n) + a 2'-deoxyribonucleoside 5'-triphosphate = DNA(n+1) + diphosphate. Replicates viral genomic DNA in the late phase of lytic infection, producing long concatemeric DNA. The replication complex is composed of six viral proteins: the DNA polymerase, processivity factor, primase, primase-associated factor, helicase, and ssDNA-binding protein. This chain is DNA polymerase catalytic subunit (UL54), found in Homo sapiens (Human).